The primary structure comprises 204 residues: Ribosomal RNA small subunit methyltransferase G (204 aa).

S-adenosyl-L-methionine is bound by residues glycine 69, phenylalanine 74, 123 to 124 (IE), and arginine 137.

Belongs to the methyltransferase superfamily. RNA methyltransferase RsmG family.

Its subcellular location is the cytoplasm. It catalyses the reaction guanosine(527) in 16S rRNA + S-adenosyl-L-methionine = N(7)-methylguanosine(527) in 16S rRNA + S-adenosyl-L-homocysteine. In terms of biological role, specifically methylates the N7 position of guanine in position 527 of 16S rRNA. The polypeptide is Ribosomal RNA small subunit methyltransferase G (Ruegeria pomeroyi (strain ATCC 700808 / DSM 15171 / DSS-3) (Silicibacter pomeroyi)).